The sequence spans 476 residues: MAVPFVEDWDLVQTLGEGAYGEVQLAVNRRTEEAVAVKIVDMKRAADCPENIKKEICINKMLNHENVVKFYGHRREGATQYLFLEYCSGGELFDRIEPDIGMPEPEAQRFFQQLIAGVVYLHSMGITHRDLKPENLLLDERDNLKISDFGLATVFKHNGRERLLNKMCGTLPYVAPELLRRPEFRAEPVDVWACGVVLTAMLAGELPWDQPSDSCQEYSDWKERKTYLAPWRKIDSAPLALLHKILTENPTARITIPDIKKDRWYCRPLKKGTKRGRVSSGGVTESPGALPKHIRSDTDFSPVKSALGEDKASYSTSQPEPGTGGALWDSSTGSIDRLVQGISFSQPACPEHMLLNSQLLGTPGSSQSPWQRLVRRMTRFFTKLDADGSYRSLRDVCEKMGYGWKQSCTNQVTISTTDRRNNKLIFKVNLLEMESRILVDFRLSKGDGLEFKRHFLKIKGKLSDVVSTQKVWLPPP.

One can recognise a Protein kinase domain in the interval 9–265; it reads WDLVQTLGEG…IPDIKKDRWY (257 aa). ATP-binding positions include 15 to 23 and K38; that span reads LGEGAYGEV. The active-site Proton acceptor is the D130. A disordered region spans residues 272-329; it reads GTKRGRVSSGGVTESPGALPKHIRSDTDFSPVKSALGEDKASYSTSQPEPGTGGALWD. S280 carries the phosphoserine; by PKB/AKT1 modification. A Phosphoserine modification is found at S296. Residue S317 is modified to Phosphoserine; by ATM and ATR. A Phosphoserine modification is found at S345. The segment at 391-476 is autoinhibitory region; it reads RSLRDVCEKM…STQKVWLPPP (86 aa).

It belongs to the protein kinase superfamily. CAMK Ser/Thr protein kinase family. NIM1 subfamily. Phosphorylated by ATR in a RAD17-dependent manner in response to ultraviolet irradiation and inhibition of DNA replication. Phosphorylated by ATM in response to ionizing irradiation. Phosphorylation at Ser-345 induces a change in the conformation of the protein and activates the kinase activity. Phosphorylation at Ser-345 also increases binding to 14-3-3 proteins and promotes nuclear retention.

Its subcellular location is the nucleus. The protein resides in the chromosome. It is found in the cytoplasm. It localises to the cytoskeleton. The protein localises to the microtubule organizing center. Its subcellular location is the centrosome. The enzyme catalyses L-seryl-[protein] + ATP = O-phospho-L-seryl-[protein] + ADP + H(+). It carries out the reaction L-threonyl-[protein] + ATP = O-phospho-L-threonyl-[protein] + ADP + H(+). Activated through phosphorylation by atr or atm in response to DNA damage or inhibition of DNA replication. Its function is as follows. Serine/threonine-protein kinase which is required for checkpoint-mediated cell cycle arrest and activation of DNA repair in response to the presence of DNA damage or unreplicated DNA. May also negatively regulate cell cycle progression during unperturbed cell cycles. This regulation is achieved by a number of mechanisms that together help to preserve the integrity of the genome. Recognizes the substrate consensus sequence [R-X-X-S/T]. Binds to and phosphorylates CDC25A, CDC25B and CDC25C. This inhibits their activity through proteasomal degradation, nucleo-cytoplasmic shuttling and inhibition by proteins of the 13-3-3 family. Inhibition of CDC25 leads to increased inhibitory tyrosine phosphorylation of CDK-cyclin complexes and blocks cell cycle progression. May promote DNA repair, regulate chromatin assembly and the transcription of genes that regulate cell-cycle progression. May also play a role in replication fork maintenance. The sequence is that of Serine/threonine-protein kinase Chk1 (CHEK1) from Gallus gallus (Chicken).